Reading from the N-terminus, the 219-residue chain is Ribose-5-phosphate isomerase A (219 aa).

Substrate is bound by residues S28 to T31, D81 to D84, and K94 to G97. The active-site Proton acceptor is E103. K121 is a binding site for substrate.

Belongs to the ribose 5-phosphate isomerase family. As to quaternary structure, homodimer.

It catalyses the reaction aldehydo-D-ribose 5-phosphate = D-ribulose 5-phosphate. The protein operates within carbohydrate degradation; pentose phosphate pathway; D-ribose 5-phosphate from D-ribulose 5-phosphate (non-oxidative stage): step 1/1. Catalyzes the reversible conversion of ribose-5-phosphate to ribulose 5-phosphate. This chain is Ribose-5-phosphate isomerase A, found in Pasteurella multocida (strain Pm70).